We begin with the raw amino-acid sequence, 527 residues long: Catalase (527 aa).

The span at 1–22 shows a compositional bias: basic and acidic residues; the sequence is MADSRDPASDQMKLWKEQRAAQ. A disordered region spans residues 1–34; that stretch reads MADSRDPASDQMKLWKEQRAAQKPDVLTTGGGNP. Alanine 2 is modified (N-acetylalanine). At serine 9 the chain carries Phosphoserine. Lysine 13 carries the N6-succinyllysine modification. Active-site residues include histidine 75 and asparagine 148. NADP(+) is bound by residues histidine 194, serine 201, arginine 203, and asparagine 213. Residue lysine 221 is modified to N6-succinyllysine. Residue lysine 233 is modified to N6-acetyllysine. The NADP(+) site is built by lysine 237, tryptophan 303, and histidine 305. Tyrosine 358 provides a ligand contact to heme. 2 positions are modified to phosphoserine: serine 422 and serine 434. N6-acetyllysine; alternate occurs at positions 449 and 480. N6-succinyllysine; alternate is present on residues lysine 449 and lysine 480. An N6-acetyllysine modification is found at lysine 499. Threonine 511 carries the post-translational modification Phosphothreonine. Serine 517 bears the Phosphoserine mark. The Microbody targeting signal; atypical signature appears at 524 to 527; the sequence is KANL.

It belongs to the catalase family. In terms of assembly, homotetramer. Interacts (via microbody targeting signal) with PEX5, monomeric form interacts with PEX5, leading to its translocation into peroxisomes. Heme serves as cofactor. It depends on NADP(+) as a cofactor.

The protein resides in the peroxisome matrix. It carries out the reaction 2 H2O2 = O2 + 2 H2O. Its function is as follows. Catalyzes the degradation of hydrogen peroxide (H(2)O(2)) generated by peroxisomal oxidases to water and oxygen, thereby protecting cells from the toxic effects of hydrogen peroxide. Promotes growth of cells including T-cells, B-cells, myeloid leukemia cells, melanoma cells, mastocytoma cells and normal and transformed fibroblast cells. The sequence is that of Catalase (CAT) from Canis lupus familiaris (Dog).